Here is a 152-residue protein sequence, read N- to C-terminus: uncharacterized protein (152 aa).

The chain crosses the membrane as a helical span at residues 12–34; sequence ALLYLGGGLLAMIYGLITFFMAF.

It to B.subtilis YfjD.

It localises to the membrane. This is an uncharacterized protein from Bacillus subtilis (strain 168).